The following is a 758-amino-acid chain: Vitamin K-dependent gamma-carboxylase (758 aa).

The segment at 1 to 34 is disordered; that stretch reads MAVSARPARAPRGPDKVKKDKAAQTSGPRQGSQM. An N-acetylalanine modification is found at alanine 2. Topologically, residues 2 to 60 are cytoplasmic; the sequence is AVSARPARAPRGPDKVKKDKAAQTSGPRQGSQMGKLLGFEWTDVSSWERLVTLLNRPTD. A compositionally biased stretch (basic and acidic residues) spans 12-22; that stretch reads RGPDKVKKDKA. Polar residues predominate over residues 23-33; the sequence is AQTSGPRQGSQ. A helical membrane pass occupies residues 61–81; that stretch reads PASLAVFRFLFGLMMVLDIPQ. The Lumenal portion of the chain corresponds to 82-113; the sequence is ERGLSSLDRRYLDGLEVCRFPLLDALQPLPLD. The cysteines at positions 99 and 450 are disulfide-linked. Residues 114 to 134 traverse the membrane as a helical segment; that stretch reads WMYLVYTIMFLGALGMMLGLC. Residues 135 to 136 lie on the Cytoplasmic side of the membrane; sequence YR. Residues 137–157 traverse the membrane as a helical segment; the sequence is ISCVLFLLPYWYVFLLDKTSW. Topologically, residues 158 to 292 are lumenal; it reads NNHSYLYGLL…VSYFHCMNSQ (135 aa). Residues 293–313 form a helical membrane-spanning segment; the sequence is LFSIGMFPYVMLASSPLFCSP. Topologically, residues 314–361 are cytoplasmic; sequence EWPRKLVAHCPKKLQELLPLRTAPQPSTSCMYKRSRARGSQKPGLRHQ. Residues 362-382 traverse the membrane as a helical segment; the sequence is LSTAFTLLYLLEQLFLPYSHF. Residues 383 to 758 are Lumenal-facing; that stretch reads LTQGYNNWTN…PDSHPVHSEF (376 aa). The disordered stretch occupies residues 726-758; sequence RPFEPAGEPSPVNTDSSNPNPPEPDSHPVHSEF. Over residues 749–758 the composition is skewed to basic and acidic residues; that stretch reads PDSHPVHSEF.

The protein belongs to the vitamin K-dependent gamma-carboxylase family. As to quaternary structure, monomer. May interact with CALU.

The protein localises to the endoplasmic reticulum membrane. It carries out the reaction 4-carboxy-L-glutamyl-[protein] + 2,3-epoxyphylloquinone + H2O + H(+) = phylloquinol + L-glutamyl-[protein] + CO2 + O2. Functionally, mediates the vitamin K-dependent carboxylation of glutamate residues to calcium-binding gamma-carboxyglutamate (Gla) residues with the concomitant conversion of the reduced hydroquinone form of vitamin K to vitamin K epoxide. Catalyzes gamma-carboxylation of various proteins, such as blood coagulation factors (F2, F7, F9 and F10), osteocalcin (BGLAP) or matrix Gla protein (MGP). The sequence is that of Vitamin K-dependent gamma-carboxylase (GGCX) from Ovis aries (Sheep).